Here is a 385-residue protein sequence, read N- to C-terminus: Outer membrane porin protein BP0840 (385 aa).

The signal sequence occupies residues 1 to 20; the sequence is MKKTLLAAALLAGFAGAAQA.

To bacterial outer membrane proteins and porins. Homotrimer.

It localises to the cell outer membrane. In terms of biological role, forms anion selective channels. The protein is Outer membrane porin protein BP0840 of Bordetella pertussis (strain Tohama I / ATCC BAA-589 / NCTC 13251).